Reading from the N-terminus, the 259-residue chain is Hydroxyacylglutathione hydrolase (259 aa).

Zn(2+)-binding residues include histidine 56, histidine 58, aspartate 60, histidine 61, histidine 112, aspartate 133, and histidine 171.

The protein belongs to the metallo-beta-lactamase superfamily. Glyoxalase II family. In terms of assembly, monomer. The cofactor is Zn(2+).

The catalysed reaction is an S-(2-hydroxyacyl)glutathione + H2O = a 2-hydroxy carboxylate + glutathione + H(+). Its pathway is secondary metabolite metabolism; methylglyoxal degradation; (R)-lactate from methylglyoxal: step 2/2. Functionally, thiolesterase that catalyzes the hydrolysis of S-D-lactoyl-glutathione to form glutathione and D-lactic acid. This Pseudomonas putida (strain ATCC 47054 / DSM 6125 / CFBP 8728 / NCIMB 11950 / KT2440) protein is Hydroxyacylglutathione hydrolase.